The sequence spans 890 residues: Alanine--tRNA ligase (890 aa).

Zn(2+) contacts are provided by histidine 569, histidine 573, cysteine 671, and histidine 675.

It belongs to the class-II aminoacyl-tRNA synthetase family. Zn(2+) is required as a cofactor.

Its subcellular location is the cytoplasm. It carries out the reaction tRNA(Ala) + L-alanine + ATP = L-alanyl-tRNA(Ala) + AMP + diphosphate. Its function is as follows. Catalyzes the attachment of alanine to tRNA(Ala) in a two-step reaction: alanine is first activated by ATP to form Ala-AMP and then transferred to the acceptor end of tRNA(Ala). Also edits incorrectly charged Ser-tRNA(Ala) and Gly-tRNA(Ala) via its editing domain. This Synechococcus sp. (strain CC9902) protein is Alanine--tRNA ligase.